Here is a 424-residue protein sequence, read N- to C-terminus: Kynureninase (424 aa).

Pyridoxal 5'-phosphate is bound by residues Leu105, Ser106, 133 to 136 (FPTD), Asp218, His221, and Tyr243. Lys244 carries the N6-(pyridoxal phosphate)lysine modification. Pyridoxal 5'-phosphate is bound by residues Trp274 and Asn302.

It belongs to the kynureninase family. Homodimer. Pyridoxal 5'-phosphate serves as cofactor.

It catalyses the reaction L-kynurenine + H2O = anthranilate + L-alanine + H(+). The catalysed reaction is 3-hydroxy-L-kynurenine + H2O = 3-hydroxyanthranilate + L-alanine + H(+). It functions in the pathway amino-acid degradation; L-kynurenine degradation; L-alanine and anthranilate from L-kynurenine: step 1/1. The protein operates within cofactor biosynthesis; NAD(+) biosynthesis; quinolinate from L-kynurenine: step 2/3. In terms of biological role, catalyzes the cleavage of L-kynurenine (L-Kyn) and L-3-hydroxykynurenine (L-3OHKyn) into anthranilic acid (AA) and 3-hydroxyanthranilic acid (3-OHAA), respectively. The polypeptide is Kynureninase (Stenotrophomonas maltophilia (strain K279a)).